A 236-amino-acid chain; its full sequence is Chloride intracellular channel protein 3 (236 aa).

Residues 1 to 88 (MAETKLQLFV…EDFLEETLGP (88 aa)) form a required for insertion into the membrane region. Residues 12 to 90 (ASEDGESVGH…FLEETLGPPD (79 aa)) enclose the GST N-terminal domain. The short motif at 22–25 (CPSC) is the G-site element. Cys-22 and Cys-25 are oxidised to a cystine. Residues 24-44 (SCQRLFMVLLLKGVPFTLTTV) traverse the membrane as a helical segment. 2 positions are modified to phosphoserine: Ser-49 and Ser-159. The 168-residue stretch at 68 to 235 (DSDAKTDTLQ…LAAYRPAVHP (168 aa)) folds into the GST C-terminal domain.

This sequence belongs to the chloride channel CLIC family. As to quaternary structure, associated with the C-terminal of MAPK15. As to expression, detected in placenta (at protein level). Widely expressed. High expression is found in placenta followed by lung and heart. Low expression in skeletal muscle, kidney and pancreas.

The protein resides in the nucleus. It localises to the membrane. The protein localises to the cell membrane. Its subcellular location is the cytoplasm. It is found in the secreted. The protein resides in the extracellular space. It localises to the extracellular matrix. It catalyses the reaction chloride(in) = chloride(out). With respect to regulation, inhibited by rapamycin, amphotericin B and IAA-94. In the soluble state, catalyzes glutaredoxin-like thiol disulfide exchange reactions with reduced glutathione as electron donor. Reduced in a glutathione-dependent way and secreted into the extracellular matrix where it activates TGM2 and promotes blood vessel growth during tissue remodeling as occurs in tumorigenesis. Can reduce specific cysteines in TGM2 and regulate cofactor binding. Can insert into membranes and form outwardly rectifying chloride ion channels. May participate in cellular growth control. This is Chloride intracellular channel protein 3 from Homo sapiens (Human).